The sequence spans 373 residues: 3-isopropylmalate dehydrogenase gloI (373 aa).

Substrate contacts are provided by S92, R98, and R108. 3 residues coordinate Mg(2+): D228, D253, and D257. NADP(+) is bound by residues 294–300 (HGSAPDI) and N307.

This sequence belongs to the isocitrate and isopropylmalate dehydrogenases family. As to quaternary structure, homodimer. Mg(2+) is required as a cofactor. Requires Mn(2+) as cofactor.

The enzyme catalyses (2R,3S)-3-isopropylmalate + NAD(+) = 4-methyl-2-oxopentanoate + CO2 + NADH. It participates in mycotoxin biosynthesis. In terms of biological role, 3-isopropylmalate dehydrogenase; part of the gene cluster that mediates the biosynthesis of pneumocandins, lipohexapeptides of the echinocandin family that prevent fungal cell wall formation by non-competitive inhibition of beta-1,3-glucan synthase. The 10,12-dimethylmyristoyl side chain is synthesized by the reducing polyketide synthase gloL/GLPKS4. The thioesterase gloN/GLHYD exclusively interacts with gloL/GLPKS4 to maintain turnover of the polyketide side chain. The 10R,12S-dimethylmyristic acid is then transferred to the first thiolation domain of the nonribosomal peptide synthetase gloA/GLNRPS4 by the acyl-AMP ligase gloD/GLligase, followed by its acylation to L-ornithine to trigger elongation of the cyclic hexapeptide. L-ornithine, 4R-hydroxyl-L-proline (generated from L-proline by the dioxygenase gloF/GLOXY2), 3S-hydroxyl-L-homotyrosine (generated by gloG/GLHtyB, gloH/GLHtyA, gloI/GLHtyC, gloJ/GLHtyD and hydroxylated at C-3 by the dioxygenase gloM/GLOXY1), 3R-hydroxyl-L-glutamine (generated from L-glutamine probably by the dioxygenase gloE/GLOXY3) and 3S-hydroxyl-L-proline (generated from L-proline by the dioxygenase gloF/GLOXY2 to yield pneumocandin B0), or 3S-hydroxyl-4S-methyl-L-proline (generated from L-leucine by the dioxygenase gloC/GLOXY4 to yield pneumocandin A0) are sequentially added to the growing chain. The last C domain of gloA/GLNRPS4 is proposed to be responsible for cyclization by condensation to form the peptide bond between L-ornithine and 3S-hydroxyl-4S-methyl-L-proline (for pneumocandin A0) or 3S-hydroxyl-L-proline (for pneumocandin B0). Finally, the subsequent C-4 hydroxylation of 3S-hydroxyl-L-homotyrosine and L-ornithine dihydroxylation at C-4 and C-5 are performed by the cytochrome P450 monooxygenases gloP/GLP450-1 and gloO/GLP450-2, respectively. The chain is 3-isopropylmalate dehydrogenase gloI from Glarea lozoyensis (strain ATCC 20868 / MF5171).